The following is a 360-amino-acid chain: MTTVLQRRESASAWERFCSFITSTNNRLYIGWFGVLMIPTLLTAVTCFVIAFIGAPPVDIDGIREPVAGSLLYGNNIITGAVVPSSNAIGLHLYPIWEAASLDEWLYNGGPYQLIIFHYMIGCICYLGRQWEYSYRLGMRPWICVAYSAPLAATYSVFLIYPLGQGSFSDGMPLGISGTFNFMFVFQAEHNILMHPFHMFGVAGVLGGSLFAAMHGSLVSSTLVRETTEGESANYGYKFGQEEETYNIVAAHGYFGRLIFQYASFSNSRSLHFFLGAWPVVCIWLTAMGISTMAFNLNGFNFNHSIVDSQGNVVNTWADVLNRANLGFEVMHERNAHNFPLDLAAGESAPVALTAPVING.

3 consecutive transmembrane segments (helical) span residues 29–46, 118–133, and 142–156; these read YIGW…TAVT, HYMI…QWEY, and WICV…ATYS. His-118 contacts chlorophyll a. Tyr-126 serves as a coordination point for pheophytin a. [CaMn4O5] cluster-binding residues include Asp-170 and Glu-189. A helical transmembrane segment spans residues 197 to 218; that stretch reads FHMFGVAGVLGGSLFAAMHGSL. His-198 provides a ligand contact to chlorophyll a. Residues His-215 and 264–265 each bind a quinone; that span reads SF. Fe cation is bound at residue His-215. His-272 provides a ligand contact to Fe cation. The chain crosses the membrane as a helical span at residues 274-288; the sequence is FLGAWPVVCIWLTAM. 4 residues coordinate [CaMn4O5] cluster: His-332, Glu-333, Asp-342, and Ala-344. A propeptide spanning residues 345–360 is cleaved from the precursor; the sequence is AGESAPVALTAPVING.

This sequence belongs to the reaction center PufL/M/PsbA/D family. PSII is composed of 1 copy each of membrane proteins PsbA, PsbB, PsbC, PsbD, PsbE, PsbF, PsbH, PsbI, PsbJ, PsbK, PsbL, PsbM, PsbT, PsbX, PsbY, PsbZ, Psb30/Ycf12, peripheral proteins PsbO, CyanoQ (PsbQ), PsbU, PsbV and a large number of cofactors. It forms dimeric complexes. It depends on The D1/D2 heterodimer binds P680, chlorophylls that are the primary electron donor of PSII, and subsequent electron acceptors. It shares a non-heme iron and each subunit binds pheophytin, quinone, additional chlorophylls, carotenoids and lipids. D1 provides most of the ligands for the Mn4-Ca-O5 cluster of the oxygen-evolving complex (OEC). There is also a Cl(-1) ion associated with D1 and D2, which is required for oxygen evolution. The PSII complex binds additional chlorophylls, carotenoids and specific lipids. as a cofactor. Tyr-161 forms a radical intermediate that is referred to as redox-active TyrZ, YZ or Y-Z. Post-translationally, C-terminally processed by CtpA; processing is essential to allow assembly of the oxygen-evolving complex and thus photosynthetic growth.

It localises to the cellular thylakoid membrane. The enzyme catalyses 2 a plastoquinone + 4 hnu + 2 H2O = 2 a plastoquinol + O2. Photosystem II (PSII) is a light-driven water:plastoquinone oxidoreductase that uses light energy to abstract electrons from H(2)O, generating O(2) and a proton gradient subsequently used for ATP formation. It consists of a core antenna complex that captures photons, and an electron transfer chain that converts photonic excitation into a charge separation. The D1/D2 (PsbA/PsbD) reaction center heterodimer binds P680, the primary electron donor of PSII as well as several subsequent electron acceptors. The polypeptide is Photosystem II protein D1 2 (Acaryochloris marina (strain MBIC 11017)).